Consider the following 660-residue polypeptide: Acetyl-coenzyme A synthetase (660 aa).

CoA contacts are provided by residues 197–200 (RGGK) and threonine 317. ATP is bound by residues 397–399 (GEP), 421–426 (DTWWQT), aspartate 512, and arginine 528. Serine 536 contacts CoA. Arginine 539 is an ATP binding site. Residues valine 550, histidine 552, and valine 555 each coordinate Mg(2+). Position 625 is an N6-acetyllysine (lysine 625).

This sequence belongs to the ATP-dependent AMP-binding enzyme family. The cofactor is Mg(2+). Post-translationally, acetylated. Deacetylation by the SIR2-homolog deacetylase activates the enzyme.

It catalyses the reaction acetate + ATP + CoA = acetyl-CoA + AMP + diphosphate. In terms of biological role, catalyzes the conversion of acetate into acetyl-CoA (AcCoA), an essential intermediate at the junction of anabolic and catabolic pathways. AcsA undergoes a two-step reaction. In the first half reaction, AcsA combines acetate with ATP to form acetyl-adenylate (AcAMP) intermediate. In the second half reaction, it can then transfer the acetyl group from AcAMP to the sulfhydryl group of CoA, forming the product AcCoA. This is Acetyl-coenzyme A synthetase from Burkholderia lata (strain ATCC 17760 / DSM 23089 / LMG 22485 / NCIMB 9086 / R18194 / 383).